A 213-amino-acid polypeptide reads, in one-letter code: Thiamine-phosphate synthase (213 aa).

Residues 40–44 (QFREK) and Asn-75 contribute to the 4-amino-2-methyl-5-(diphosphooxymethyl)pyrimidine site. Positions 76 and 95 each coordinate Mg(2+). Ser-113 is a 4-amino-2-methyl-5-(diphosphooxymethyl)pyrimidine binding site. 139–141 (TPS) is a 2-[(2R,5Z)-2-carboxy-4-methylthiazol-5(2H)-ylidene]ethyl phosphate binding site. Lys-142 contacts 4-amino-2-methyl-5-(diphosphooxymethyl)pyrimidine. Residues Gly-171 and 191 to 192 (IS) contribute to the 2-[(2R,5Z)-2-carboxy-4-methylthiazol-5(2H)-ylidene]ethyl phosphate site.

Belongs to the thiamine-phosphate synthase family. Mg(2+) is required as a cofactor.

The enzyme catalyses 2-[(2R,5Z)-2-carboxy-4-methylthiazol-5(2H)-ylidene]ethyl phosphate + 4-amino-2-methyl-5-(diphosphooxymethyl)pyrimidine + 2 H(+) = thiamine phosphate + CO2 + diphosphate. It catalyses the reaction 2-(2-carboxy-4-methylthiazol-5-yl)ethyl phosphate + 4-amino-2-methyl-5-(diphosphooxymethyl)pyrimidine + 2 H(+) = thiamine phosphate + CO2 + diphosphate. It carries out the reaction 4-methyl-5-(2-phosphooxyethyl)-thiazole + 4-amino-2-methyl-5-(diphosphooxymethyl)pyrimidine + H(+) = thiamine phosphate + diphosphate. It participates in cofactor biosynthesis; thiamine diphosphate biosynthesis; thiamine phosphate from 4-amino-2-methyl-5-diphosphomethylpyrimidine and 4-methyl-5-(2-phosphoethyl)-thiazole: step 1/1. Its function is as follows. Condenses 4-methyl-5-(beta-hydroxyethyl)thiazole monophosphate (THZ-P) and 2-methyl-4-amino-5-hydroxymethyl pyrimidine pyrophosphate (HMP-PP) to form thiamine monophosphate (TMP). This chain is Thiamine-phosphate synthase, found in Staphylococcus aureus (strain MSSA476).